A 110-amino-acid chain; its full sequence is Large ribosomal subunit protein uL22 (110 aa).

It belongs to the universal ribosomal protein uL22 family. In terms of assembly, part of the 50S ribosomal subunit.

Its function is as follows. This protein binds specifically to 23S rRNA; its binding is stimulated by other ribosomal proteins, e.g. L4, L17, and L20. It is important during the early stages of 50S assembly. It makes multiple contacts with different domains of the 23S rRNA in the assembled 50S subunit and ribosome. In terms of biological role, the globular domain of the protein is located near the polypeptide exit tunnel on the outside of the subunit, while an extended beta-hairpin is found that lines the wall of the exit tunnel in the center of the 70S ribosome. This Alkaliphilus oremlandii (strain OhILAs) (Clostridium oremlandii (strain OhILAs)) protein is Large ribosomal subunit protein uL22.